We begin with the raw amino-acid sequence, 186 residues long: MISTKDFRNGLKIEIDGKPYEIVEFQHFKPGKGGAFVRTKLRNMFTGRITDQTFRSGEKVKKPDMATKEMQYLYKDGEDYVLMDLESYEQMNVAADVIATAGGFLKEGETNKALLYNGEVIGIELPASVILEVTQTDPGVQGDRVSNATKPATLETGLGINVPLFINEGDKIKVDTRSSEYLGREK.

The protein belongs to the elongation factor P family.

It is found in the cytoplasm. Its pathway is protein biosynthesis; polypeptide chain elongation. Its function is as follows. Involved in peptide bond synthesis. Stimulates efficient translation and peptide-bond synthesis on native or reconstituted 70S ribosomes in vitro. Probably functions indirectly by altering the affinity of the ribosome for aminoacyl-tRNA, thus increasing their reactivity as acceptors for peptidyl transferase. The sequence is that of Elongation factor P from Maridesulfovibrio salexigens (strain ATCC 14822 / DSM 2638 / NCIMB 8403 / VKM B-1763) (Desulfovibrio salexigens).